A 1444-amino-acid polypeptide reads, in one-letter code: ABC transporter G family member 39 (1444 aa).

Residues 1–36 (MDIVRMGSVASGGGSVRRTASSWRGTSGRSDAFGRS) form a disordered region. The span at 19-29 (TASSWRGTSGR) shows a compositional bias: polar residues. The region spanning 154–426 (LSAMRIVSSG…FEAMGFKCPE (273 aa)) is the ABC transporter 1 domain. 187 to 194 (GPPGSGKT) is a binding site for ATP. Residues 504–717 (ELTKACFSRE…AQNAIAVNEF (214 aa)) form the ABC transmembrane type-2 1 domain. 6 consecutive transmembrane segments (helical) span residues 522 to 542 (FVYI…MTVF), 555 to 575 (GAIF…NGFA), 610 to 630 (IPIS…VMGF), 642 to 662 (VLLV…AALG), 667 to 687 (VADT…GFLI), and 754 to 774 (IGVG…ILFL). The ABC transporter 2 domain maps to 846 to 1098 (ITFDNIRYSV…HLINYFEGIQ (253 aa)). ATP is bound at residue 891-898 (GVSGAGKT). One can recognise an ABC transmembrane type-2 2 domain in the interval 1171–1385 (TQCMACLWKQ…TLYGLVASQY (215 aa)). The next 7 membrane-spanning stretches (helical) occupy residues 1192-1212 (ATRI…FLNL), 1220-1240 (LDLF…GIQN), 1278-1298 (IPHI…LIGF), 1305-1325 (FFWY…YGMM), 1335-1355 (IAAI…GFLI), 1362-1382 (IWWR…GLVA), and 1414-1434 (LGYV…VFAF).

It belongs to the ABC transporter superfamily. ABCG family. PDR (TC 3.A.1.205) subfamily.

It is found in the membrane. Its function is as follows. May be a general defense protein. The protein is ABC transporter G family member 39 of Oryza sativa subsp. japonica (Rice).